We begin with the raw amino-acid sequence, 159 residues long: Ribosomal RNA large subunit methyltransferase H (159 aa).

Residues Leu76, Gly108, and 127 to 132 (FSKMTF) contribute to the S-adenosyl-L-methionine site.

The protein belongs to the RNA methyltransferase RlmH family. As to quaternary structure, homodimer.

The protein localises to the cytoplasm. It catalyses the reaction pseudouridine(1915) in 23S rRNA + S-adenosyl-L-methionine = N(3)-methylpseudouridine(1915) in 23S rRNA + S-adenosyl-L-homocysteine + H(+). Functionally, specifically methylates the pseudouridine at position 1915 (m3Psi1915) in 23S rRNA. In Clostridium novyi (strain NT), this protein is Ribosomal RNA large subunit methyltransferase H.